We begin with the raw amino-acid sequence, 212 residues long: Adapter protein MecA 2 (212 aa).

This sequence belongs to the MecA family. As to quaternary structure, homodimer.

In terms of biological role, enables the recognition and targeting of unfolded and aggregated proteins to the ClpC protease or to other proteins involved in proteolysis. Acts negatively in the development of competence by binding ComK and recruiting it to the ClpCP protease. When overexpressed, inhibits sporulation. Also involved in Spx degradation by ClpC. In Halalkalibacterium halodurans (strain ATCC BAA-125 / DSM 18197 / FERM 7344 / JCM 9153 / C-125) (Bacillus halodurans), this protein is Adapter protein MecA 2 (mecA2).